The sequence spans 230 residues: 2,3-bisphosphoglycerate-dependent phosphoglycerate mutase (230 aa).

Residues 10–17 (RHGESKWN), 23–24 (TG), R62, 89–92 (ERNY), K100, 116–117 (RR), and 185–186 (GN) contribute to the substrate site. H11 functions as the Tele-phosphohistidine intermediate in the catalytic mechanism. The active-site Proton donor/acceptor is E89.

The protein belongs to the phosphoglycerate mutase family. BPG-dependent PGAM subfamily. Homodimer.

It carries out the reaction (2R)-2-phosphoglycerate = (2R)-3-phosphoglycerate. Its pathway is carbohydrate degradation; glycolysis; pyruvate from D-glyceraldehyde 3-phosphate: step 3/5. Functionally, catalyzes the interconversion of 2-phosphoglycerate and 3-phosphoglycerate. This is 2,3-bisphosphoglycerate-dependent phosphoglycerate mutase from Buchnera aphidicola subsp. Cinara cedri (strain Cc).